Consider the following 53-residue polypeptide: Sec-independent protein translocase protein TatA (53 aa).

Residues 1 to 21 (MGMSFSHLLIVLLIIFVLFGA) traverse the membrane as a helical segment.

The protein belongs to the TatA/E family. In terms of assembly, the Tat system comprises two distinct complexes: a TatABC complex, containing multiple copies of TatA, TatB and TatC subunits, and a separate TatA complex, containing only TatA subunits. Substrates initially bind to the TatABC complex, which probably triggers association of the separate TatA complex to form the active translocon.

It is found in the cell inner membrane. Its function is as follows. Part of the twin-arginine translocation (Tat) system that transports large folded proteins containing a characteristic twin-arginine motif in their signal peptide across membranes. TatA could form the protein-conducting channel of the Tat system. This chain is Sec-independent protein translocase protein TatA, found in Rickettsia africae (strain ESF-5).